A 650-amino-acid chain; its full sequence is Macrolide export ATP-binding/permease protein MacB (650 aa).

Positions 6-244 (LKLTGITRRF…ASSPEAASSP (239 aa)) constitute an ABC transporter domain. 42–49 (GASGSGKS) is a binding site for ATP. The tract at residues 227-246 (QTRPEEATASSPEAASSPAT) is disordered. The segment covering 233–246 (ATASSPEAASSPAT) has biased composition (low complexity). A run of 4 helical transmembrane segments spans residues 275 to 295 (FLTM…VALG), 523 to 543 (LTLL…IGVM), 580 to 600 (LVCL…GVLF), and 615 to 635 (SIIA…FFPA).

This sequence belongs to the ABC transporter superfamily. Macrolide exporter (TC 3.A.1.122) family. Homodimer. Part of the tripartite efflux system MacAB-TolC, which is composed of an inner membrane transporter, MacB, a periplasmic membrane fusion protein, MacA, and an outer membrane component, TolC. The complex forms a large protein conduit and can translocate molecules across both the inner and outer membranes. Interacts with MacA.

It is found in the cell inner membrane. Its function is as follows. Part of the tripartite efflux system MacAB-TolC. MacB is a non-canonical ABC transporter that contains transmembrane domains (TMD), which form a pore in the inner membrane, and an ATP-binding domain (NBD), which is responsible for energy generation. Confers resistance against macrolides. The sequence is that of Macrolide export ATP-binding/permease protein MacB from Pectobacterium atrosepticum (strain SCRI 1043 / ATCC BAA-672) (Erwinia carotovora subsp. atroseptica).